We begin with the raw amino-acid sequence, 690 residues long: Glycine--tRNA ligase beta subunit (690 aa).

Belongs to the class-II aminoacyl-tRNA synthetase family. Tetramer of two alpha and two beta subunits.

It is found in the cytoplasm. The enzyme catalyses tRNA(Gly) + glycine + ATP = glycyl-tRNA(Gly) + AMP + diphosphate. The protein is Glycine--tRNA ligase beta subunit of Lactobacillus gasseri (strain ATCC 33323 / DSM 20243 / BCRC 14619 / CIP 102991 / JCM 1131 / KCTC 3163 / NCIMB 11718 / NCTC 13722 / AM63).